Here is a 155-residue protein sequence, read N- to C-terminus: Conopressin/neurophysin (155 aa).

The N-terminal stretch at 1-26 (MMSSLCGMPLTYLLTAAVLSLSLTDA) is a signal peptide. Residues Cys-27 and Cys-32 are joined by a disulfide bond. At Gly-35 the chain carries Glycine amide. 7 disulfide bridges follow: Cys-50–Cys-94, Cys-53–Cys-67, Cys-61–Cys-84, Cys-68–Cys-74, Cys-101–Cys-115, Cys-109–Cys-127, and Cys-116–Cys-121. Residue Asn-88 is glycosylated (N-linked (GlcNAc...) asparagine).

The protein belongs to the vasopressin/oxytocin family. Post-translationally, seven disulfide bonds are present in neurophysin.

The protein resides in the secreted. The sequence is that of Conopressin/neurophysin from Lymnaea stagnalis (Great pond snail).